Here is a 293-residue protein sequence, read N- to C-terminus: Undecaprenyl-diphosphatase (293 aa).

7 helical membrane passes run 3-23 (IALAIKALILGIVEGLTEFLP), 43-63 (KGKIFEIVIQFGAILAVCWEF), 85-105 (INVIVATIPAITLALIFGKAI), 109-129 (LFNPIVVASAFILGGFVILWA), 203-223 (VATEFSFFLAIPVIFGATVYE), 238-258 (IFAVGFVAAFISAFFCVRWLL), and 269-289 (FAWYRIIFGIIVLATAYTHLI).

The protein belongs to the UppP family.

It localises to the cell inner membrane. The enzyme catalyses di-trans,octa-cis-undecaprenyl diphosphate + H2O = di-trans,octa-cis-undecaprenyl phosphate + phosphate + H(+). Functionally, catalyzes the dephosphorylation of undecaprenyl diphosphate (UPP). Confers resistance to bacitracin. The chain is Undecaprenyl-diphosphatase from Ralstonia pickettii (strain 12J).